The sequence spans 388 residues: Na(+)/H(+) antiporter NhaA (388 aa).

Transmembrane regions (helical) follow at residues 14–34 (GGII…MGAT), 59–79 (MLLW…GLEV), 95–115 (AFPV…YLAF), 125–145 (GWAI…ALLG), 154–174 (IFLM…IALF), 179–199 (LSIV…LLNL), 219–239 (VLKS…FIPL), 254–274 (VLHP…NAGV), 292–312 (IIAG…WLAL), 328–348 (IMAV…IASL), and 360–380 (WAKL…YSWL).

This sequence belongs to the NhaA Na(+)/H(+) (TC 2.A.33) antiporter family.

The protein localises to the cell inner membrane. The enzyme catalyses Na(+)(in) + 2 H(+)(out) = Na(+)(out) + 2 H(+)(in). Functionally, na(+)/H(+) antiporter that extrudes sodium in exchange for external protons. The chain is Na(+)/H(+) antiporter NhaA from Salmonella choleraesuis (strain SC-B67).